A 225-amino-acid chain; its full sequence is MANINFGFEHHASKLYSGAIEQGIQNSLVPMVIETSGRGERAFDIFSRLLRERIIFLGSGIDEHVAGLIMAQLIFLESEDPERDIYIYVNSPGGSVSAGLGIYDTMQYIRPDVSTVCVGMAASMGAFLLASGAKGKRASLPHSRIMIHQPSGGAQGQESDIIIQAREIEKIRRLLEEILASHTGKDVQQVREDSERDRWMNAEEALDYGIIDQVFAKRPAPEKKD.

S123 functions as the Nucleophile in the catalytic mechanism. Residue H148 is part of the active site.

This sequence belongs to the peptidase S14 family. In terms of assembly, fourteen ClpP subunits assemble into 2 heptameric rings which stack back to back to give a disk-like structure with a central cavity, resembling the structure of eukaryotic proteasomes.

It is found in the cytoplasm. It catalyses the reaction Hydrolysis of proteins to small peptides in the presence of ATP and magnesium. alpha-casein is the usual test substrate. In the absence of ATP, only oligopeptides shorter than five residues are hydrolyzed (such as succinyl-Leu-Tyr-|-NHMec, and Leu-Tyr-Leu-|-Tyr-Trp, in which cleavage of the -Tyr-|-Leu- and -Tyr-|-Trp bonds also occurs).. In terms of biological role, cleaves peptides in various proteins in a process that requires ATP hydrolysis. Has a chymotrypsin-like activity. Plays a major role in the degradation of misfolded proteins. The polypeptide is ATP-dependent Clp protease proteolytic subunit (Chlorobium luteolum (strain DSM 273 / BCRC 81028 / 2530) (Pelodictyon luteolum)).